A 205-amino-acid polypeptide reads, in one-letter code: Ypt/Rab-type GTPase ypt7 (205 aa).

GTP contacts are provided by residues 17–23 (SGVGKTS), 33–40 (FSKDYKAT), Gly66, 125–128 (NKVD), and 157–159 (SAK). Residues 37–45 (YKATIGADF) carry the Effector region motif. S-geranylgeranyl cysteine attachment occurs at residues Cys203 and Cys205. At Cys205 the chain carries Cysteine methyl ester.

The protein belongs to the small GTPase superfamily. Rab family.

Its subcellular location is the vacuole membrane. Its activity is regulated as follows. Rab activation is generally mediated by a guanine exchange factor (GEF), while inactivation through hydrolysis of bound GTP is catalyzed by a GTPase activating protein (GAP). Its function is as follows. Ypt/Rab-type GTPases are key regulators of membrane trafficking and intracellular vesicular transport. They act as molecular switches that convert between GTP-bound and GDP-bound states, and regulate virtually all steps of membrane traffic from the formation of the transport vesicle at the donor membrane to its fusion at the target membrane. In the GDP-bound state, Ypt proteins are predominantly cytosolic, solubilized through the interaction with a GDP dissociation inhibitor (GDI). In the GTP-bound state, the proteins are membrane bound and interact with specific effector proteins that select cargo, promote vesicle movement, or verify the correct site of fusion. Ypt7 is necessary for trafficking from the endosome to the vacuole and for homotypic vacuole fusion. Plays an important role in sporulation. The sequence is that of Ypt/Rab-type GTPase ypt7 (ypt7) from Schizosaccharomyces pombe (strain 972 / ATCC 24843) (Fission yeast).